Consider the following 63-residue polypeptide: Ferredoxin (63 aa).

Positions 3–31 (WKVSVDVDTCIGDAICASLCPDVFEMGDD) constitute a 4Fe-4S ferredoxin-type domain. 3 residues coordinate [4Fe-4S] cluster: C12, D15, and C18. A disulfide bond links C22 and C45. Residue C53 participates in [4Fe-4S] cluster binding.

It depends on [4Fe-4S] cluster as a cofactor. [3Fe-4S] cluster is required as a cofactor.

In terms of biological role, ferredoxins are iron-sulfur proteins that transfer electrons in a wide variety of metabolic reactions. The protein is Ferredoxin (fdxA) of Thermococcus kodakarensis (strain ATCC BAA-918 / JCM 12380 / KOD1) (Pyrococcus kodakaraensis (strain KOD1)).